We begin with the raw amino-acid sequence, 231 residues long: 2-C-methyl-D-erythritol 4-phosphate cytidylyltransferase (231 aa).

The protein belongs to the IspD/TarI cytidylyltransferase family. IspD subfamily.

It carries out the reaction 2-C-methyl-D-erythritol 4-phosphate + CTP + H(+) = 4-CDP-2-C-methyl-D-erythritol + diphosphate. The protein operates within isoprenoid biosynthesis; isopentenyl diphosphate biosynthesis via DXP pathway; isopentenyl diphosphate from 1-deoxy-D-xylulose 5-phosphate: step 2/6. Catalyzes the formation of 4-diphosphocytidyl-2-C-methyl-D-erythritol from CTP and 2-C-methyl-D-erythritol 4-phosphate (MEP). The sequence is that of 2-C-methyl-D-erythritol 4-phosphate cytidylyltransferase from Clostridium kluyveri (strain NBRC 12016).